The primary structure comprises 476 residues: MKVSLPAFEKAKVLVVGDVMLDRYWVGPTGRISPEAPVPVVKINQVEDRPGGAANVALNIATLGGQVQLAGLVGEDDTAKALTLGVQALGVEPQWLKIADKPTITKLRVLSRNQQLIRLDFEESFDKQDSARLLKQSEALLDSVDVVVLSDYAKGAIDKPQDFIALARAKGVKVLVDPKGSDFSRYHGASLITPNMSEFEAVVGAVTSEADLLEKARGLLNKHQFDAILVTRSEKGMTLVTANAPELHIPTVAREVYDVTGAGDTVISALATSLAAGAELPQACAIANTAAGVVVGKLGTSTVSRIELIEALALHHGESGFGVVSEDQLAYALEQAKLRGERVVMTNGCFDILHAGHVSYLKQAKALGDRLIVAVNDDASVKRLKGEGRPVNQVDRRMAVLAGLAAVDWVVPFSEDTPQRIIARLLPDLLVKGGDYKIEDIAGGAEVIAAGGQVQVLGFEDGISTTAIIQNIMAKQ.

Positions 1 to 319 are ribokinase; that stretch reads MKVSLPAFEK…EALALHHGES (319 aa). 195–198 contacts ATP; it reads NMSE. Residue Asp264 is part of the active site. The interval 345 to 476 is cytidylyltransferase; sequence MTNGCFDILH…AIIQNIMAKQ (132 aa).

It in the N-terminal section; belongs to the carbohydrate kinase PfkB family. In the C-terminal section; belongs to the cytidylyltransferase family. As to quaternary structure, homodimer.

The catalysed reaction is D-glycero-beta-D-manno-heptose 7-phosphate + ATP = D-glycero-beta-D-manno-heptose 1,7-bisphosphate + ADP + H(+). It catalyses the reaction D-glycero-beta-D-manno-heptose 1-phosphate + ATP + H(+) = ADP-D-glycero-beta-D-manno-heptose + diphosphate. The protein operates within nucleotide-sugar biosynthesis; ADP-L-glycero-beta-D-manno-heptose biosynthesis; ADP-L-glycero-beta-D-manno-heptose from D-glycero-beta-D-manno-heptose 7-phosphate: step 1/4. It participates in nucleotide-sugar biosynthesis; ADP-L-glycero-beta-D-manno-heptose biosynthesis; ADP-L-glycero-beta-D-manno-heptose from D-glycero-beta-D-manno-heptose 7-phosphate: step 3/4. Its function is as follows. Catalyzes the phosphorylation of D-glycero-D-manno-heptose 7-phosphate at the C-1 position to selectively form D-glycero-beta-D-manno-heptose-1,7-bisphosphate. In terms of biological role, catalyzes the ADP transfer from ATP to D-glycero-beta-D-manno-heptose 1-phosphate, yielding ADP-D-glycero-beta-D-manno-heptose. The chain is Bifunctional protein HldE from Shewanella sp. (strain MR-4).